A 355-amino-acid polypeptide reads, in one-letter code: Phosphoribosylformylglycinamidine cyclo-ligase (355 aa).

The protein belongs to the AIR synthase family.

The protein resides in the cytoplasm. The catalysed reaction is 2-formamido-N(1)-(5-O-phospho-beta-D-ribosyl)acetamidine + ATP = 5-amino-1-(5-phospho-beta-D-ribosyl)imidazole + ADP + phosphate + H(+). It functions in the pathway purine metabolism; IMP biosynthesis via de novo pathway; 5-amino-1-(5-phospho-D-ribosyl)imidazole from N(2)-formyl-N(1)-(5-phospho-D-ribosyl)glycinamide: step 2/2. This chain is Phosphoribosylformylglycinamidine cyclo-ligase, found in Methylobacterium sp. (strain 4-46).